We begin with the raw amino-acid sequence, 112 residues long: Ribonuclease P protein component (112 aa).

The protein belongs to the RnpA family. Consists of a catalytic RNA component (M1 or rnpB) and a protein subunit.

The enzyme catalyses Endonucleolytic cleavage of RNA, removing 5'-extranucleotides from tRNA precursor.. RNaseP catalyzes the removal of the 5'-leader sequence from pre-tRNA to produce the mature 5'-terminus. It can also cleave other RNA substrates such as 4.5S RNA. The protein component plays an auxiliary but essential role in vivo by binding to the 5'-leader sequence and broadening the substrate specificity of the ribozyme. The protein is Ribonuclease P protein component of Mycoplasma mobile (strain ATCC 43663 / 163K / NCTC 11711) (Mesomycoplasma mobile).